Reading from the N-terminus, the 1048-residue chain is Selenate reductase subunit A (1048 aa).

The segment at residues 1–39 is a signal peptide (tat-type signal); it reads MENQHQKFISRRNFIKTSALLGGTAFLGTGLPNIKKTYS. The 4Fe-4S Mo/W bis-MGD-type domain maps to 56–129; the sequence is ENILYSACLQ…AGIQHAYDPY (74 aa). C63, C66, C70, and C115 together coordinate [4Fe-4S] cluster. C270 is a binding site for Mo-bis(molybdopterin guanine dinucleotide).

This sequence belongs to the prokaryotic molybdopterin-containing oxidoreductase family. As to quaternary structure, the complex is composed of three subunits: SrdA, SrdB and SrdC. It depends on [4Fe-4S] cluster as a cofactor. Requires Mo-bis(molybdopterin guanine dinucleotide) as cofactor. In terms of processing, predicted to be exported by the Tat system. The position of the signal peptide cleavage has not been experimentally proven.

Its subcellular location is the secreted. It carries out the reaction selenite + a quinone + H2O = selenate + a quinol. Functionally, component of the respiratory selenate reductase complex, which catalyzes the reduction of selenate to selenite. SrdA is probably the catalytic subunit that reduces selenate. The chain is Selenate reductase subunit A from Mesobacillus selenatarsenatis (strain DSM 18680 / JCM 14380 / FERM P-15431 / SF-1).